Consider the following 398-residue polypeptide: Trans-2-enoyl-CoA reductase [NADH] (398 aa).

NAD(+) is bound by residues 47–52, 74–75, 111–112, and 139–140; these read GASSGF, FE, DA, and LA. Substrate is bound at residue Tyr225. The active-site Proton donor is the Tyr235. Residues Lys244 and 274–276 contribute to the NAD(+) site; that span reads IVT.

Belongs to the TER reductase family. In terms of assembly, monomer.

It carries out the reaction a 2,3-saturated acyl-CoA + NAD(+) = a (2E)-enoyl-CoA + NADH + H(+). It functions in the pathway lipid metabolism; fatty acid biosynthesis. In terms of biological role, involved in the fatty acid synthesis (FAS II). Catalyzes the reduction of a carbon-carbon double bond in an enoyl moiety that is covalently linked to a coenzyme A (CoA). The polypeptide is Trans-2-enoyl-CoA reductase [NADH] (Clostridium beijerinckii (strain ATCC 51743 / NCIMB 8052) (Clostridium acetobutylicum)).